A 149-amino-acid polypeptide reads, in one-letter code: Large ribosomal subunit protein eL19 (149 aa).

Residues 45–94 (VADGTIDAEDTQGNSRGRARERDAKESYGHKKGAGSRKGKAGARQNEKRE) form a disordered region. The span at 62–73 (RARERDAKESYG) shows a compositional bias: basic and acidic residues. The segment covering 74-85 (HKKGAGSRKGKA) has biased composition (basic residues).

Belongs to the eukaryotic ribosomal protein eL19 family. Part of the 50S ribosomal subunit.

In terms of biological role, binds to the 23S rRNA. The chain is Large ribosomal subunit protein eL19 from Halobacterium salinarum (strain ATCC 700922 / JCM 11081 / NRC-1) (Halobacterium halobium).